We begin with the raw amino-acid sequence, 210 residues long: Ribosomal RNA large subunit methyltransferase E (210 aa).

Residues Gly-67, Trp-69, Asp-87, Asp-103, and Asp-128 each coordinate S-adenosyl-L-methionine. Catalysis depends on Lys-168, which acts as the Proton acceptor.

The protein belongs to the class I-like SAM-binding methyltransferase superfamily. RNA methyltransferase RlmE family.

It is found in the cytoplasm. It carries out the reaction uridine(2552) in 23S rRNA + S-adenosyl-L-methionine = 2'-O-methyluridine(2552) in 23S rRNA + S-adenosyl-L-homocysteine + H(+). Its function is as follows. Specifically methylates the uridine in position 2552 of 23S rRNA at the 2'-O position of the ribose in the fully assembled 50S ribosomal subunit. This is Ribosomal RNA large subunit methyltransferase E from Psychrobacter cryohalolentis (strain ATCC BAA-1226 / DSM 17306 / VKM B-2378 / K5).